The primary structure comprises 125 residues: Small ribosomal subunit protein uS12m (125 aa).

Belongs to the universal ribosomal protein uS12 family.

The protein localises to the mitochondrion. Its function is as follows. Protein S12 is involved in the translation initiation step. The chain is Small ribosomal subunit protein uS12m (RPS12) from Brassica napus (Rape).